The following is a 496-amino-acid chain: Transcription factor CP2 (496 aa).

A Grh/CP2 DB domain is found at 61–300 (ENKILPFQYV…SPGFNSSHSS (240 aa)). A DNA-binding region spans residues 133 to 386 (EHQQLEGWRW…LFNALKGRMV (254 aa)). Disordered regions lie at residues 238 to 268 (FKPK…YQPS) and 296 to 327 (SSHS…LLPT). Residues 241 to 265 (KGADRKQKTDREKMEKRTPHEKEKY) show a composition bias toward basic and acidic residues.

The protein belongs to the grh/CP2 family. CP2 subfamily. Component of the SSP (stage selector protein) complex, which appears to be a heteromer of TFCP2 and 2 copies of NFE4. As to expression, expressed in the epiblast at the pre-primitive streak stage. At the primitive streak stage, expressed in the extending primitive streak and in the prospective neural plate. At stages 7 and 8, expressed in the neural folds, somites and in the regressing primitive streak. At stage 12, ubiquitously expressed in the whole embryo.

Its subcellular location is the nucleus. In terms of biological role, binds the B-response element 5'-CAAGTCCAGGCAAGT-3' of the ENS1/ERNI promoter. May be the major transcription activator thus being essential for its expression. This chain is Transcription factor CP2 (TFCP2), found in Gallus gallus (Chicken).